The following is a 328-amino-acid chain: Probable nicotianamine synthase 6 (328 aa).

It belongs to the nicotianamine synthase (NAS)-like family.

The catalysed reaction is 3 S-adenosyl-L-methionine = nicotianamine + 3 S-methyl-5'-thioadenosine + 3 H(+). In terms of biological role, synthesizes nicotianamine, a polyamine that is the first intermediate in the synthesis of the phytosiderophores of the mugineic acid type found in gramineae which serves as a sensor for the physiological iron status within the plant, and/or might be involved in the transport of iron. The polypeptide is Probable nicotianamine synthase 6 (NAS6) (Hordeum vulgare (Barley)).